The primary structure comprises 362 residues: MRVLAAMSGGVDSSVAAARMVDAGHEVVGVHLALSSTPRSHREGARGCCSLEDARDARRAADVLGIPFYVWDVAERFRQDVIEDFLAEYAQGRTPNPCLRCNERIKFAAVLDRALALGFDAVCTGHYARIQRGPQGLELHRAADSAKDQSYVLGVLSQPQLEHALFPLGDSLKTEVRAEAAARGLAVADKPDSHDICFIPDGDTADFLRSHLGAAPGDIVDSSGRRLGSHDGAYQFTVGQRRGLRLGTPAPDGRPRYVLEVSPVTRTVVVGTADELSVTGLTGVRPIWCGPPPDAPLECTVQYRAHGAAAPAVVELRGDEVDVEFRAPVRGVAPGQAAVFYADTRVLGSATIARTRRAAVGS.

ATP is bound by residues Ala-6–Ser-13 and Leu-32. Residue Cys-101 is the Nucleophile of the active site. A disulfide bridge connects residues Cys-101 and Cys-197. Gly-125 contacts ATP. Residues Lys-147–Gln-149 form an interaction with tRNA region. The Cysteine persulfide intermediate role is filled by Cys-197.

The protein belongs to the MnmA/TRMU family.

It is found in the cytoplasm. It carries out the reaction S-sulfanyl-L-cysteinyl-[protein] + uridine(34) in tRNA + AH2 + ATP = 2-thiouridine(34) in tRNA + L-cysteinyl-[protein] + A + AMP + diphosphate + H(+). Functionally, catalyzes the 2-thiolation of uridine at the wobble position (U34) of tRNA, leading to the formation of s(2)U34. In Acidothermus cellulolyticus (strain ATCC 43068 / DSM 8971 / 11B), this protein is tRNA-specific 2-thiouridylase MnmA.